A 705-amino-acid polypeptide reads, in one-letter code: Elongation factor G (705 aa).

The 284-residue stretch at 8–291 folds into the tr-type G domain; it reads EKVRNIGIMA…AVVEYLPSPI (284 aa). Residues 17–24, 90–94, and 144–147 each bind GTP; these read AHIDAGKT, DTPGH, and NKMD.

This sequence belongs to the TRAFAC class translation factor GTPase superfamily. Classic translation factor GTPase family. EF-G/EF-2 subfamily.

The protein resides in the cytoplasm. Functionally, catalyzes the GTP-dependent ribosomal translocation step during translation elongation. During this step, the ribosome changes from the pre-translocational (PRE) to the post-translocational (POST) state as the newly formed A-site-bound peptidyl-tRNA and P-site-bound deacylated tRNA move to the P and E sites, respectively. Catalyzes the coordinated movement of the two tRNA molecules, the mRNA and conformational changes in the ribosome. This chain is Elongation factor G, found in Chloroherpeton thalassium (strain ATCC 35110 / GB-78).